The sequence spans 461 residues: Phosphomethylpyrimidine synthase (461 aa).

Substrate-binding positions include Asn-80, Met-109, Tyr-138, His-173, 193 to 195 (SRG), 234 to 237 (DGLR), and Glu-273. His-277 contacts Zn(2+). Tyr-300 provides a ligand contact to substrate. His-341 contributes to the Zn(2+) binding site. [4Fe-4S] cluster contacts are provided by Cys-421, Cys-424, and Cys-429.

Belongs to the ThiC family. It depends on [4Fe-4S] cluster as a cofactor.

The catalysed reaction is 5-amino-1-(5-phospho-beta-D-ribosyl)imidazole + S-adenosyl-L-methionine = 4-amino-2-methyl-5-(phosphooxymethyl)pyrimidine + CO + 5'-deoxyadenosine + formate + L-methionine + 3 H(+). Its pathway is cofactor biosynthesis; thiamine diphosphate biosynthesis. Functionally, catalyzes the synthesis of the hydroxymethylpyrimidine phosphate (HMP-P) moiety of thiamine from aminoimidazole ribotide (AIR) in a radical S-adenosyl-L-methionine (SAM)-dependent reaction. This is Phosphomethylpyrimidine synthase from Solibacter usitatus (strain Ellin6076).